We begin with the raw amino-acid sequence, 63 residues long: Translational regulator CsrA (63 aa).

The protein belongs to the CsrA/RsmA family. In terms of assembly, homodimer; the beta-strands of each monomer intercalate to form a hydrophobic core, while the alpha-helices form wings that extend away from the core.

Its subcellular location is the cytoplasm. A key translational regulator that binds mRNA to regulate translation initiation and/or mRNA stability. Mediates global changes in gene expression, shifting from rapid growth to stress survival by linking envelope stress, the stringent response and the catabolite repression systems. Usually binds in the 5'-UTR; binding at or near the Shine-Dalgarno sequence prevents ribosome-binding, repressing translation, binding elsewhere in the 5'-UTR can activate translation and/or stabilize the mRNA. Its function is antagonized by small RNA(s). The polypeptide is Translational regulator CsrA (Alteromonas mediterranea (strain DSM 17117 / CIP 110805 / LMG 28347 / Deep ecotype)).